The chain runs to 425 residues: Cytokine receptor-like factor 1 (425 aa).

A signal peptide spans 1–33 (MPAGRPGPVAQSARRPPRPLSSLWSPLLLCVLG). Residues 35–134 (PRGGSGAHTA…SILAGSCLYV (100 aa)) enclose the Ig-like C2-type domain. Residues Asn95, Asn107, and Asn143 are each glycosylated (N-linked (GlcNAc...) asparagine). Fibronectin type-III domains follow at residues 140 to 235 (KPFN…VLDV) and 240 to 344 (PPPD…TPRS). Cys146 and Cys156 are oxidised to a cystine. N-linked (GlcNAc...) asparagine glycosylation occurs at Asn171. An intrachain disulfide couples Cys187 to Cys198. Ser222 carries the phosphoserine modification. Asn295 is a glycosylation site (N-linked (GlcNAc...) asparagine). The short motif at 330–334 (WSEWS) is the WSXWS motif element. Residues 335 to 366 (HPTAASTPRSERPGPGGGVCEPRGGEPSSGPV) are disordered. Asn385 is a glycosylation site (N-linked (GlcNAc...) asparagine). The disordered stretch occupies residues 402 to 425 (HKTRNQDEGILPSGRRGAARGPAG). The segment covering 415–425 (GRRGAARGPAG) has biased composition (low complexity).

This sequence belongs to the type I cytokine receptor family. Type 3 subfamily. As to quaternary structure, forms covalent di- and tetramers. Forms a heteromeric complex with cardiotrophin-like cytokine CLCF1/CLC; the CRLF1-CLCF1 complex is a ligand for the ciliary neurotrophic factor receptor/CNTFR. The CRLF1-CLCF1 heterodimer, as well as tripartite signaling complex formed by CRLF1, CLCF1 and CNTFR bind SORL1 (via N-terminal ectodomain); within this complex, the interaction is mediated predominantly by the CRLF1 moiety. As to expression, widely expressed in the embryo. Not detected in the brain of adult mice.

The protein localises to the secreted. Functionally, in complex with CLCF1, forms a heterodimeric neurotropic cytokine that plays a crucial role during neuronal development. Plays a role in the initiation and/or maintenance of suckling in neonatal mice. May also play a regulatory role in the immune system. The sequence is that of Cytokine receptor-like factor 1 (Crlf1) from Mus musculus (Mouse).